The primary structure comprises 240 residues: Cell division control protein 14 (240 aa).

As to quaternary structure, interacts with sid1.

It localises to the cytoplasm. Its subcellular location is the cytoskeleton. The protein resides in the microtubule organizing center. The protein localises to the spindle pole body. Functionally, has a role in the septation initiation network (SIN) required for cytokinesis. The polypeptide is Cell division control protein 14 (cdc14) (Schizosaccharomyces pombe (strain 972 / ATCC 24843) (Fission yeast)).